Here is a 591-residue protein sequence, read N- to C-terminus: V-type ATP synthase alpha chain (591 aa).

242 to 249 (GPFGAGKT) provides a ligand contact to ATP.

It belongs to the ATPase alpha/beta chains family.

It carries out the reaction ATP + H2O + 4 H(+)(in) = ADP + phosphate + 5 H(+)(out). Produces ATP from ADP in the presence of a proton gradient across the membrane. The V-type alpha chain is a catalytic subunit. In Chlamydia caviae (strain ATCC VR-813 / DSM 19441 / 03DC25 / GPIC) (Chlamydophila caviae), this protein is V-type ATP synthase alpha chain.